The chain runs to 115 residues: Large ribosomal subunit protein bL20 (115 aa).

The protein belongs to the bacterial ribosomal protein bL20 family.

Binds directly to 23S ribosomal RNA and is necessary for the in vitro assembly process of the 50S ribosomal subunit. It is not involved in the protein synthesizing functions of that subunit. This chain is Large ribosomal subunit protein bL20, found in Chlorobaculum parvum (strain DSM 263 / NCIMB 8327) (Chlorobium vibrioforme subsp. thiosulfatophilum).